A 137-amino-acid polypeptide reads, in one-letter code: Large-conductance mechanosensitive channel (137 aa).

Helical transmembrane passes span 10–30 (FAMR…AAFG) and 76–96 (GVFI…FMAI).

Belongs to the MscL family. Homopentamer.

It localises to the cell inner membrane. Its function is as follows. Channel that opens in response to stretch forces in the membrane lipid bilayer. May participate in the regulation of osmotic pressure changes within the cell. The sequence is that of Large-conductance mechanosensitive channel from Klebsiella pneumoniae subsp. pneumoniae (strain ATCC 700721 / MGH 78578).